We begin with the raw amino-acid sequence, 340 residues long: Probable D,D-dipeptide transport system permease protein DdpB (340 aa).

Topologically, residues 1 to 11 (MTFWSILRQRC) are periplasmic. Residues 12–32 (WGLVLVVAGVCVITFIISHLI) traverse the membrane as a helical segment. Over 33-104 (PGDPARLLAG…IFFPATLELA (72 aa)) the chain is Cytoplasmic. The ABC transmembrane type-1 domain maps to 97 to 327 (FPATLELAFG…LVNLVVDLLY (231 aa)). The helical transmembrane segment at 105–125 (FGALLLALLIGIPLGILSAVW) threads the bilayer. The Periplasmic segment spans residues 126–135 (RNRWLDHLVR). A helical transmembrane segment spans residues 136 to 156 (IMAITGISTPAFWLGLGVIVL). The Cytoplasmic portion of the chain corresponds to 157 to 199 (FYGHLQILPGGGRLDDWLDPPTHVTGFYLLDALLEGNGEVFFN). The chain crosses the membrane as a helical span at residues 200-220 (ALQHLILPALTLAFVHLGIVA). Topologically, residues 221-246 (RQIRSAMLEQLSEDYIRTARASGLPG) are periplasmic. A helical transmembrane segment spans residues 247–269 (WYIVLCYALPNALIPSITVLGLA). The Cytoplasmic portion of the chain corresponds to 270-279 (LGDLLYGAVL). Residues 280–300 (TETVFAWPGMGAWVVTSIQAL) form a helical membrane-spanning segment. Residue aspartate 301 is a topological domain, periplasmic. A helical membrane pass occupies residues 302-322 (FPAVMGFAVVVSFAYVLVNLV). Over 323 to 340 (VDLLYLWIDPRIGRGGGE) the chain is Cytoplasmic.

It belongs to the binding-protein-dependent transport system permease family. OppBC subfamily. The complex is composed of two ATP-binding proteins (DdpD and DdpF), two transmembrane proteins (DdpB and DdpC) and a solute-binding protein (DdpA).

It localises to the cell inner membrane. In terms of biological role, part of the ABC transporter complex DdpABCDF, which is probably involved in D,D-dipeptide transport. Probably responsible for the translocation of the substrate across the membrane. The sequence is that of Probable D,D-dipeptide transport system permease protein DdpB (ddpB) from Escherichia coli (strain K12).